The primary structure comprises 78 residues: NAD(P)H-quinone oxidoreductase subunit O (78 aa).

The protein belongs to the complex I NdhO subunit family. NDH-1 can be composed of about 15 different subunits; different subcomplexes with different compositions have been identified which probably have different functions.

It localises to the cellular thylakoid membrane. The enzyme catalyses a plastoquinone + NADH + (n+1) H(+)(in) = a plastoquinol + NAD(+) + n H(+)(out). The catalysed reaction is a plastoquinone + NADPH + (n+1) H(+)(in) = a plastoquinol + NADP(+) + n H(+)(out). In terms of biological role, NDH-1 shuttles electrons from an unknown electron donor, via FMN and iron-sulfur (Fe-S) centers, to quinones in the respiratory and/or the photosynthetic chain. The immediate electron acceptor for the enzyme in this species is believed to be plastoquinone. Couples the redox reaction to proton translocation, and thus conserves the redox energy in a proton gradient. Cyanobacterial NDH-1 also plays a role in inorganic carbon-concentration. This chain is NAD(P)H-quinone oxidoreductase subunit O, found in Prochlorococcus marinus (strain MIT 9215).